We begin with the raw amino-acid sequence, 443 residues long: Cyclic GMP-AMP synthase (443 aa).

Residue Ser-61 participates in ATP binding. Active-site residues include Asp-78 and Asp-80. Asp-80 is a Mg(2+) binding site. Asn-124 lines the ATP pocket. The active site involves Asp-138. Position 138 (Asp-138) interacts with Mg(2+). Leu-208 is an ATP binding site.

The protein belongs to the CD-NTase family. B06 subfamily. Mg(2+) serves as cofactor.

The enzyme catalyses GTP + ATP = 3',3'-cGAMP + 2 diphosphate. It catalyses the reaction UTP + ATP = 3',3'-cUAMP + 2 diphosphate. The catalysed reaction is 2 ATP = 3',3'-c-di-AMP + 2 diphosphate. It carries out the reaction 2 GTP = 3',3'-c-di-GMP + 2 diphosphate. The enzyme catalyses UTP + GTP = 3',3'-cGMP-UMP + 2 diphosphate. In terms of biological role, cyclic nucleotide synthase (second messenger synthase) of a CBASS antivirus system. CBASS (cyclic oligonucleotide-based antiphage signaling system) provides immunity against bacteriophages. The CD-NTase protein (CdnB, this protein) synthesizes cyclic nucleotides in response to infection; these serve as specific second messenger signals. The signals activate a diverse range of effectors, leading to bacterial cell death and thus abortive phage infection. The effector protein for this system is membrane protein Cap15. Catalyzes the synthesis of 3',3'-cyclic GMP-AMP (3'3'-cGAMP) from GTP and ATP, a second messenger in cell signal transduction. Also makes cyclic UMP-AMP, cyclic UMP-GMP, cyclic di-AMP and cyclic-di-GMP. Its function is as follows. Protects E.coli against phage infection. When the CBASS operon (cdnB-cap15) is introduced in E.coli MG1655 there is about 100-fold protection against phage T2 and about 10-fold protection against phage T5 and T6. The polypeptide is Cyclic GMP-AMP synthase (Escherichia albertii).